Here is a 157-residue protein sequence, read N- to C-terminus: Transcriptional repressor NrdR (157 aa).

A zinc finger spans residues 3–34 (CPFCNAEDTKVIDSRLVEEGTQVRRRRECLKC). One can recognise an ATP-cone domain in the interval 49–139 (PRIIKRDGRR…VYRSFQDINA (91 aa)).

It belongs to the NrdR family. It depends on Zn(2+) as a cofactor.

Its function is as follows. Negatively regulates transcription of bacterial ribonucleotide reductase nrd genes and operons by binding to NrdR-boxes. This Coxiella burnetii (strain CbuK_Q154) (Coxiella burnetii (strain Q154)) protein is Transcriptional repressor NrdR.